The sequence spans 542 residues: Peptide chain release factor 3 (542 aa).

Residues 11 to 279 form the tr-type G domain; sequence EKRRTFAIIS…AYVEYAPSPR (269 aa). GTP-binding positions include 20-27, 88-92, and 142-145; these read SHPDAGKT, DTPGH, and NKLD.

The protein belongs to the TRAFAC class translation factor GTPase superfamily. Classic translation factor GTPase family. PrfC subfamily.

The protein resides in the cytoplasm. Its function is as follows. Increases the formation of ribosomal termination complexes and stimulates activities of RF-1 and RF-2. It binds guanine nucleotides and has strong preference for UGA stop codons. It may interact directly with the ribosome. The stimulation of RF-1 and RF-2 is significantly reduced by GTP and GDP, but not by GMP. This chain is Peptide chain release factor 3, found in Nitrosococcus oceani (strain ATCC 19707 / BCRC 17464 / JCM 30415 / NCIMB 11848 / C-107).